Reading from the N-terminus, the 975-residue chain is Chromosome transmission fidelity protein 18 homolog (975 aa).

2 disordered regions span residues 30-83 (EGAS…KRQV) and 114-141 (SEEM…DLAE). A Phosphothreonine modification is found at threonine 51. The segment covering 58 to 77 (RGDAASSPAPAASVGSSQGG) has biased composition (low complexity). Serine 64 carries the post-translational modification Phosphoserine. A compositionally biased stretch (pro residues) spans 122–136 (PPDSSPTDITPPPSP). At serine 225 the chain carries Phosphoserine. Disordered stretches follow at residues 246–276 (SDTL…GQDA) and 320–346 (RPSR…KWKS). 374-381 (GPPGLGKT) provides a ligand contact to ATP. The interval 858–896 (ASARVENSPQVDGSPPGLEGLLGGIGEKGVHRPAPRNHE) is disordered. Serine 871 is modified (phosphoserine).

Belongs to the activator 1 small subunits family. CTF18 subfamily. As to quaternary structure, component of the CTF18-RFC complex, which consists of CTF18, CTF8, DCC1, RFC2, RFC3, RFC4 and RFC5. During assembly of the CTF18-RFC complex, CTF18 may first assemble into a subcomplex with RFC2, RFC3, RFC4 and RFC5. CTF18 then interacts directly with CTF8, which in turn interacts with DCC1. The CTF18-RFC complex associates with PCNA and with DNA polymerase POLH. The CTF18-RFC complex does not interact with the Rad9/Rad1/Hus1 complex. CTF18 interacts with SMC1A and RAD21. Interacts with DDX11.

Its subcellular location is the nucleus. Chromosome cohesion factor involved in sister chromatid cohesion and fidelity of chromosome transmission. Component of one of the cell nuclear antigen loader complexes, CTF18-replication factor C (CTF18-RFC), which consists of CTF18, CTF8, DCC1, RFC2, RFC3, RFC4 and RFC5. The CTF18-RFC complex binds to single-stranded and primed DNAs and has weak ATPase activity that is stimulated by the presence of primed DNA, replication protein A (RPA) and by proliferating cell nuclear antigen (PCNA). The CTF18-RFC complex catalyzes the ATP-dependent loading of PCNA onto primed and gapped DNA. Interacts with and stimulates DNA polymerase POLH. During DNA repair synthesis, involved in loading DNA polymerase POLE at the sites of local damage. The chain is Chromosome transmission fidelity protein 18 homolog (CHTF18) from Homo sapiens (Human).